We begin with the raw amino-acid sequence, 282 residues long: Armadillo repeat-containing protein 1 (282 aa).

At Met1 the chain carries N-acetylmethionine. An ARM repeat occupies 39-81 (GCLPGLILFMDHPNPPVVHSALLALRYLAECRANREKMKGELG). Position 137 is a phosphothreonine (Thr137). A phosphoserine mark is found at Ser189, Ser246, Ser260, and Ser267. The tract at residues 239 to 261 (DYLPEDESPTKEQDKAVSRVGSH) is disordered. Residues 246–255 (SPTKEQDKAV) are compositionally biased toward basic and acidic residues.

Interacts with mitochondrial contact site and cristae organizing system (MICOS) complex components IMMT/MIC60 and MICOS10/MIC10. Interacts with mitochondrial outer membrane sorting assembly machinery (SAM) complex components SAMM50 and MTX1.

It is found in the cytoplasm. The protein resides in the mitochondrion. The protein localises to the mitochondrion outer membrane. Its function is as follows. In association with mitochondrial contact site and cristae organizing system (MICOS) complex components and mitochondrial outer membrane sorting assembly machinery (SAM) complex components may regulate mitochondrial dynamics playing a role in determining mitochondrial length, distribution and motility. This Mus musculus (Mouse) protein is Armadillo repeat-containing protein 1 (Armc1).